A 295-amino-acid polypeptide reads, in one-letter code: Sulfotransferase 1A1 (295 aa).

3'-phosphoadenylyl sulfate is bound at residue 48–53; it reads KSGTTW. 106 to 108 serves as a coordination point for substrate; it reads KTH. His-108 (proton acceptor) is an active-site residue. 3'-phosphoadenylyl sulfate is bound by residues Arg-130, Ser-138, Tyr-193, 227 to 232, and 255 to 259; these read TSFKEM and FMRKG. Position 138 is a phosphoserine (Ser-138).

It belongs to the sulfotransferase 1 family. In terms of assembly, homodimer.

It localises to the cytoplasm. The catalysed reaction is a phenol + 3'-phosphoadenylyl sulfate = an aryl sulfate + adenosine 3',5'-bisphosphate + H(+). It catalyses the reaction 17beta-estradiol + 3'-phosphoadenylyl sulfate = 17beta-estradiol 3-sulfate + adenosine 3',5'-bisphosphate + H(+). It carries out the reaction 4-ethylphenol + 3'-phosphoadenylyl sulfate = 4-ethylphenyl sulfate + adenosine 3',5'-bisphosphate + H(+). The enzyme catalyses 4-nitrophenol + 3'-phosphoadenylyl sulfate = 4-nitrophenyl sulfate + adenosine 3',5'-bisphosphate. The catalysed reaction is dopamine + 3'-phosphoadenylyl sulfate = dopamine 3-O-sulfate + adenosine 3',5'-bisphosphate + H(+). It catalyses the reaction dopamine + 3'-phosphoadenylyl sulfate = dopamine 4-O-sulfate + adenosine 3',5'-bisphosphate + H(+). It carries out the reaction 3,3',5-triiodo-L-thyronine + 3'-phosphoadenylyl sulfate = 3,3',5-triiodo-L-thyronine sulfate + adenosine 3',5'-bisphosphate + H(+). The enzyme catalyses 3,3',5'-triiodo-L-thyronine + 3'-phosphoadenylyl sulfate = 3,3',5'-triiodo-L-thyronine sulfate + adenosine 3',5'-bisphosphate + H(+). The catalysed reaction is 3,3'-diiodo-L-thyronine + 3'-phosphoadenylyl sulfate = 3,3'-diiodo-L-thyronine sulfate + adenosine 3',5'-bisphosphate + H(+). It catalyses the reaction L-thyroxine + 3'-phosphoadenylyl sulfate = L-thyroxine sulfate + adenosine 3',5'-bisphosphate + H(+). In terms of biological role, sulfotransferase that utilizes 3'-phospho-5'-adenylyl sulfate (PAPS) as sulfonate donor to catalyze the sulfate conjugation of a wide variety of acceptor molecules bearing a hydroxyl or an amine group. Sulfonation increases the water solubility of most compounds, and therefore their renal excretion, but it can also result in bioactivation to form active metabolites. Displays broad substrate specificity for small phenolic compounds. Plays an important role in the sulfonation of endogenous molecules such as steroid hormones. Mediates also the metabolic activation of carcinogenic N-hydroxyarylamines leading to highly reactive intermediates capable of forming DNA adducts, potentially resulting in mutagenesis. May play a role in gut microbiota-host metabolic interaction. O-sulfonates 4-ethylphenol (4-EP), a dietary tyrosine-derived metabolite produced by gut bacteria. The product 4-EPS crosses the blood-brain barrier and may negatively regulate oligodendrocyte maturation and myelination, affecting the functional connectivity of different brain regions associated with the limbic system. Catalyzes the sulfate conjugation of dopamine. Catalyzes the sulfation of T4 (L-thyroxine/3,5,3',5'-tetraiodothyronine), T3 (3,5,3'-triiodothyronine), rT3 (3,3',5'-triiodothyronine) and 3,3'-T2 (3,3'-diiodothyronine), with a substrate preference of 3,3'-T2 &gt; rT3 &gt; T3 &gt; T4. The chain is Sulfotransferase 1A1 (SULT1A1) from Macaca fascicularis (Crab-eating macaque).